The following is a 165-amino-acid chain: MALNLQDKQAIVAEVSEVAKGALSAVVADSRGVTVDKMTELRKAGREAGVYMRVVRNTLLRRVVEGTQFECLKDTFVGPTLIAYSMEHPGAAARLFKDFAKANAKFEVKAAAFEGELIPAAQIDRLATLPTYEEALARLMSTMKEAAAGKLVRTLAAVRDAKEAA.

The protein belongs to the universal ribosomal protein uL10 family. As to quaternary structure, part of the ribosomal stalk of the 50S ribosomal subunit. The N-terminus interacts with L11 and the large rRNA to form the base of the stalk. The C-terminus forms an elongated spine to which L12 dimers bind in a sequential fashion forming a multimeric L10(L12)X complex.

Its function is as follows. Forms part of the ribosomal stalk, playing a central role in the interaction of the ribosome with GTP-bound translation factors. This is Large ribosomal subunit protein uL10 from Pectobacterium atrosepticum (strain SCRI 1043 / ATCC BAA-672) (Erwinia carotovora subsp. atroseptica).